We begin with the raw amino-acid sequence, 434 residues long: 3-phosphoshikimate 1-carboxyvinyltransferase (434 aa).

3-phosphoshikimate is bound by residues Lys-22, Ser-23, and Arg-27. Residue Lys-22 coordinates phosphoenolpyruvate. Residues Gly-93 and Arg-121 each coordinate phosphoenolpyruvate. The 3-phosphoshikimate site is built by Ser-168, Ser-169, Gln-170, Ser-199, Asp-320, and Lys-347. Residue Gln-170 coordinates phosphoenolpyruvate. Asp-320 (proton acceptor) is an active-site residue. Phosphoenolpyruvate-binding residues include Arg-351, Arg-394, and Lys-419.

This sequence belongs to the EPSP synthase family. In terms of assembly, monomer.

The protein resides in the cytoplasm. The enzyme catalyses 3-phosphoshikimate + phosphoenolpyruvate = 5-O-(1-carboxyvinyl)-3-phosphoshikimate + phosphate. It participates in metabolic intermediate biosynthesis; chorismate biosynthesis; chorismate from D-erythrose 4-phosphate and phosphoenolpyruvate: step 6/7. Catalyzes the transfer of the enolpyruvyl moiety of phosphoenolpyruvate (PEP) to the 5-hydroxyl of shikimate-3-phosphate (S3P) to produce enolpyruvyl shikimate-3-phosphate and inorganic phosphate. The sequence is that of 3-phosphoshikimate 1-carboxyvinyltransferase from Paraburkholderia phymatum (strain DSM 17167 / CIP 108236 / LMG 21445 / STM815) (Burkholderia phymatum).